The following is a 411-amino-acid chain: Transforming growth factor beta regulator 1 (411 aa).

2 disordered regions span residues 1–29 (MSLL…PKKS) and 119–146 (GPIS…KGKE). Ser-2 carries the N-acetylserine modification. The residue at position 10 (Ser-10) is a Phosphoserine. The 60-residue stretch at 182 to 241 (VFPIGLGGLTVYSLGEIITDRPGFHDESAIYPVGYCSTRIYASMKCPDQKCLYTCQIKDG) folds into the FYR N-terminal domain. In terms of domain architecture, FYR C-terminal spans 242–321 (GVQPQFEIVP…RKCINYQWVK (80 aa)).

It belongs to the TBRG1 family. As to quaternary structure, interacts with CDKN2A and MDM2. Post-translationally, ubiquitinated; mediated by MDM2 and leading to its subsequent proteasomal degradation. In terms of tissue distribution, widely expressed at low levels in most tissues, with highest levels in pancreas, lung and liver. Expression is decreased in primary tumors including lung, liver, breast, pancreas and kidney carcinomas, chronic lymphocytic leukemia and diffuse large B-cell lymphoma.

It is found in the nucleus. In terms of biological role, acts as a growth inhibitor. Can activate p53/TP53, causes G1 arrest and collaborates with CDKN2A to restrict proliferation, but does not require either protein to inhibit DNA synthesis. Redistributes CDKN2A into the nucleoplasm. Involved in maintaining chromosomal stability. The chain is Transforming growth factor beta regulator 1 (TBRG1) from Homo sapiens (Human).